A 212-amino-acid polypeptide reads, in one-letter code: Adenine phosphoribosyltransferase (212 aa).

The protein belongs to the purine/pyrimidine phosphoribosyltransferase family. As to quaternary structure, homodimer.

It localises to the cytoplasm. The enzyme catalyses AMP + diphosphate = 5-phospho-alpha-D-ribose 1-diphosphate + adenine. Its pathway is purine metabolism; AMP biosynthesis via salvage pathway; AMP from adenine: step 1/1. Its function is as follows. Catalyzes a salvage reaction resulting in the formation of AMP, that is energically less costly than de novo synthesis. This is Adenine phosphoribosyltransferase from Mycobacterium tuberculosis (strain ATCC 25618 / H37Rv).